Here is a 253-residue protein sequence, read N- to C-terminus: MLETTIRNKLAQKDILLMTHIVIGYPDLDTSFEVVRTMVEAGVDLMELQIPFSEPMADGPVILKANQDALATGITVDECFDFAEKVAAAYDIPFLFMTYYNILFKYGVEAFAERMAKCGLCGAIVPDLPPEEADDYLAAMNKHGMAPIFIYAPNTTEARMQRIAEHGKGFIYCMARKGVTGLQTDFSGQLGDHLDHCRASTQLPLALGFGVKDRADVEFIKGKADIAVVGSQAIRVLDEGGVPAVEAFIRSLR.

Residues glutamate 47 and aspartate 58 each act as proton acceptor in the active site.

This sequence belongs to the TrpA family. In terms of assembly, tetramer of two alpha and two beta chains.

The catalysed reaction is (1S,2R)-1-C-(indol-3-yl)glycerol 3-phosphate + L-serine = D-glyceraldehyde 3-phosphate + L-tryptophan + H2O. Its pathway is amino-acid biosynthesis; L-tryptophan biosynthesis; L-tryptophan from chorismate: step 5/5. The alpha subunit is responsible for the aldol cleavage of indoleglycerol phosphate to indole and glyceraldehyde 3-phosphate. The sequence is that of Tryptophan synthase alpha chain from Syntrophotalea carbinolica (strain DSM 2380 / NBRC 103641 / GraBd1) (Pelobacter carbinolicus).